Reading from the N-terminus, the 120-residue chain is Inner membrane protein YidG (120 aa).

Topologically, residues Met-1 to Ser-21 are cytoplasmic. Residues Leu-22–Ile-39 traverse the membrane as a helical segment. At Lys-40–Met-48 the chain is on the periplasmic side. Residues Leu-49–Thr-68 traverse the membrane as a helical segment. At Arg-69 to Lys-90 the chain is on the cytoplasmic side. A helical transmembrane segment spans residues Phe-91–Ile-113. The Periplasmic segment spans residues Val-114–Ala-120.

Its subcellular location is the cell inner membrane. This chain is Inner membrane protein YidG (yidG), found in Escherichia coli O157:H7.